The sequence spans 157 residues: Protein FAM218A (157 aa).

The interval 104–127 is disordered; sequence PAVTPPKLPGHSKSEGPPGKVRKR.

This chain is Protein FAM218A (FAM218A), found in Homo sapiens (Human).